Here is a 238-residue protein sequence, read N- to C-terminus: Large ribosomal subunit protein uL2 (238 aa).

Residues 198–238 (NHPHGGGSHQSPSFPTTVSRNAPPGRKVGHIAARSTGRRKR) are disordered. Polar residues predominate over residues 206–217 (HQSPSFPTTVSR).

Belongs to the universal ribosomal protein uL2 family. Part of the 50S ribosomal subunit. Forms a bridge to the 30S subunit in the 70S ribosome.

Functionally, one of the primary rRNA binding proteins. Required for association of the 30S and 50S subunits to form the 70S ribosome, for tRNA binding and peptide bond formation. It has been suggested to have peptidyltransferase activity; this is somewhat controversial. Makes several contacts with the 16S rRNA in the 70S ribosome. In Hyperthermus butylicus (strain DSM 5456 / JCM 9403 / PLM1-5), this protein is Large ribosomal subunit protein uL2.